The chain runs to 27 residues: Voltage-dependent anion-selective channel protein (27 aa).

Belongs to the eukaryotic mitochondrial porin family. In terms of assembly, interacts with hexokinases. As to expression, photoreceptors.

It localises to the mitochondrion outer membrane. Functionally, forms a channel through the cell membrane that allows diffusion of small hydrophilic molecules. The sequence is that of Voltage-dependent anion-selective channel protein from Doryteuthis pealeii (Longfin inshore squid).